A 383-amino-acid polypeptide reads, in one-letter code: MSHLRRRRFKLSLCALPVSIDRLLNFPAEKQMSVNDSIDPRFVFHVEDESLRFRVGDSGTKIRELETVGDRHFRTQQGFCGNRIEKDETMYSDGDDEEYDVSIRRRTALIQPGIDSGNNYDSAAAEETNRESKNPVGWELVVREDGEGNSTIDRHEMEFKVRITKPDGNVSNSHRNTQQKRDFASVEKERVTTTSVSSWESLKAILSDPVTGALMNDATILPCGHSFGAGGLKEVKKMKACFTCSQPTLEGSEKPNLSLRIVVHAFRQEEDSDHIHTLKRRKERSDQKRSFCIPNITETPKSSRGIQFPFSIGDHIIIEGNKRTPPRFVGRIAVIMTQCLNGWYVVKTVDNSESIKLQHCSLAKISDNSSTKVTVAEMPPSWL.

Residues proline 166–valine 186 form a disordered region. In terms of domain architecture, U-box spans serine 201 to aspartate 273.

It catalyses the reaction S-ubiquitinyl-[E2 ubiquitin-conjugating enzyme]-L-cysteine + [acceptor protein]-L-lysine = [E2 ubiquitin-conjugating enzyme]-L-cysteine + N(6)-ubiquitinyl-[acceptor protein]-L-lysine.. Its pathway is protein modification; protein ubiquitination. In terms of biological role, functions as an E3 ubiquitin ligase. This is U-box domain-containing protein 63 (PUB63) from Arabidopsis thaliana (Mouse-ear cress).